Consider the following 408-residue polypeptide: uncharacterized protein (408 aa).

This is an uncharacterized protein from Methanocaldococcus jannaschii (strain ATCC 43067 / DSM 2661 / JAL-1 / JCM 10045 / NBRC 100440) (Methanococcus jannaschii).